The primary structure comprises 307 residues: tRNA pseudouridine synthase B (307 aa).

D48 acts as the Nucleophile in catalysis.

The protein belongs to the pseudouridine synthase TruB family. Type 1 subfamily.

The catalysed reaction is uridine(55) in tRNA = pseudouridine(55) in tRNA. Responsible for synthesis of pseudouridine from uracil-55 in the psi GC loop of transfer RNAs. This Pasteurella multocida (strain Pm70) protein is tRNA pseudouridine synthase B.